A 193-amino-acid chain; its full sequence is Acyl-homoserine-lactone synthase (193 aa).

It belongs to the autoinducer synthase family.

The enzyme catalyses a fatty acyl-[ACP] + S-adenosyl-L-methionine = an N-acyl-L-homoserine lactone + S-methyl-5'-thioadenosine + holo-[ACP] + H(+). Its function is as follows. Required for the synthesis of OHHL (N-(3-oxohexanoyl)-L-homoserine lactone) also known as VAI or N-(beta-ketocaproyl)homoserine lactone or 3-oxo-N-(tetrahydro-2-oxo-3-furanyl)-hexanamide, an autoinducer molecule which binds to LuxR and thus acts in bioluminescence regulation. This chain is Acyl-homoserine-lactone synthase (luxI), found in Aliivibrio fischeri (strain ATCC 700601 / ES114) (Vibrio fischeri).